We begin with the raw amino-acid sequence, 273 residues long: Putative phosphoenolpyruvate synthase regulatory protein (273 aa).

Residue 154–161 coordinates ADP; sequence GVSRSGKT.

It belongs to the pyruvate, phosphate/water dikinase regulatory protein family. PSRP subfamily.

It carries out the reaction [pyruvate, water dikinase] + ADP = [pyruvate, water dikinase]-phosphate + AMP + H(+). The enzyme catalyses [pyruvate, water dikinase]-phosphate + phosphate + H(+) = [pyruvate, water dikinase] + diphosphate. Functionally, bifunctional serine/threonine kinase and phosphorylase involved in the regulation of the phosphoenolpyruvate synthase (PEPS) by catalyzing its phosphorylation/dephosphorylation. This Neisseria gonorrhoeae (strain ATCC 700825 / FA 1090) protein is Putative phosphoenolpyruvate synthase regulatory protein.